Consider the following 259-residue polypeptide: Kallikrein 1-related peptidase b22 (259 aa).

A signal peptide spans 1-17 (MRFLILFLTLSLGGIDA). Positions 18–24 (APPVQSR) are cleaved as a propeptide — activation peptide. One can recognise a Peptidase S1 domain in the interval 25–256 (ILGGFKCEKN…FTSWIKDTMA (232 aa)). Intrachain disulfides connect C31-C171, C50-C66, C150-C217, C182-C196, and C207-C232. H65 functions as the Charge relay system in the catalytic mechanism. Residue N102 is glycosylated (N-linked (GlcNAc...) asparagine). D118 serves as the catalytic Charge relay system. The Charge relay system role is filled by S211.

It belongs to the peptidase S1 family. Kallikrein subfamily.

The enzyme catalyses Preferential cleavage of Arg-|-Xaa bonds in small molecule substrates. Highly selective action to release kallidin (lysyl-bradykinin) from kininogen involves hydrolysis of Met-|-Xaa or Leu-|-Xaa.. Glandular kallikreins cleave Met-Lys and Arg-Ser bonds in kininogen to release Lys-bradykinin. The sequence is that of Kallikrein 1-related peptidase b22 (Klk1b22) from Mus musculus (Mouse).